The primary structure comprises 150 residues: Arginine repressor (150 aa).

Belongs to the ArgR family.

The protein resides in the cytoplasm. It participates in amino-acid biosynthesis; L-arginine biosynthesis [regulation]. Functionally, regulates arginine biosynthesis genes. This is Arginine repressor from Clostridium botulinum (strain 657 / Type Ba4).